The primary structure comprises 177 residues: B-phycoerythrin beta chain (177 aa).

C50 and C61 together coordinate (2R,3E)-phycoerythrobilin. N72 bears the N4-methylasparagine mark. Positions 82 and 158 each coordinate (2R,3E)-phycoerythrobilin.

Belongs to the phycobiliprotein family. In terms of assembly, heterotetramer of one alpha-1, one alpha-2, and two beta chains. In terms of processing, contains three covalently linked bilin chromophores.

The protein localises to the plastid. It is found in the chloroplast thylakoid membrane. Its function is as follows. Light-harvesting photosynthetic bile pigment-protein from the phycobiliprotein complex. The polypeptide is B-phycoerythrin beta chain (cpeB) (Guillardia theta (Cryptophyte)).